Reading from the N-terminus, the 187-residue chain is Putative manganese efflux pump MntP (187 aa).

A run of 6 helical transmembrane segments spans residues 3 to 23 (FYSL…VSLC), 35 to 55 (HYLI…TIGY), 56 to 76 (FIGI…AFIL), 107 to 127 (LALA…FAFL), 129 to 149 (VNLL…CIIA), and 166 to 186 (LLGG…HLFF).

It belongs to the MntP (TC 9.B.29) family.

The protein localises to the cell inner membrane. Its function is as follows. Probably functions as a manganese efflux pump. In Campylobacter jejuni subsp. doylei (strain ATCC BAA-1458 / RM4099 / 269.97), this protein is Putative manganese efflux pump MntP.